Consider the following 418-residue polypeptide: MAEWKIYTPEGVQDILQNECFFKKNLEDRIRKVFRASGYYEVETPIVEFYDVFSTEENIIPQETMFKFFDQQGRILVLRPDLTIPIARVAATKLKDAAYPLRISYIGNAFKYNELGGGKQKEFTQAGVEIIGVNTPEADAEVIATAIDAVKATGLENFQIDIGQVEFFKGLMEETGLSEEETEKMRVLIDRKDFLGIEELVEEHNIRDDLKELILDFPKLFGSTDVIDRVEKYPINERSIKALNNLRSIINILDDYGLSKYVSVDLGMVQSLNYYSGTIFRGFTYGVGFPILSGGRYDRLVEKFGKSSPATGFSMGINMVMMALDRQKVEFEKPRVDTLVCYREEGRKTAFQICETLRKQGLAVEVDINGGDFETARNYAALKGIGGILKVLDDENIEIHNLEKGEVSKVTISELLKA.

Belongs to the class-II aminoacyl-tRNA synthetase family. HisZ subfamily. Heteromultimer composed of HisG and HisZ subunits.

The protein localises to the cytoplasm. It participates in amino-acid biosynthesis; L-histidine biosynthesis; L-histidine from 5-phospho-alpha-D-ribose 1-diphosphate: step 1/9. In terms of biological role, required for the first step of histidine biosynthesis. May allow the feedback regulation of ATP phosphoribosyltransferase activity by histidine. This Acetivibrio thermocellus (strain ATCC 27405 / DSM 1237 / JCM 9322 / NBRC 103400 / NCIMB 10682 / NRRL B-4536 / VPI 7372) (Clostridium thermocellum) protein is ATP phosphoribosyltransferase regulatory subunit.